We begin with the raw amino-acid sequence, 228 residues long: MTDALLRCKELSKSYQDGGDQVTVLKDIDFALQAGEMVAVVGASGSGKSTLLHLLGGLDKPSSGQLFYKDQEMTPWKADKLAQWRNQNLGFVYQFHHLLPEFSALENVAMPQMIAGKSPTEAKQQAEQLLVRVGLEHRLSHRPAQLSGGERQRVAIARAFVNKPQVVLADEPTGNLDGEAAESIYQLMLELNQEMGTAFIVVTHDLQLAEQLQRVEVLKNGILHKEQG.

One can recognise an ABC transporter domain in the interval 6–228; the sequence is LRCKELSKSY…KNGILHKEQG (223 aa). An ATP-binding site is contributed by 42-49; the sequence is GASGSGKS.

This sequence belongs to the ABC transporter superfamily. Lipoprotein translocase (TC 3.A.1.125) family. In terms of assembly, the complex is composed of two ATP-binding proteins (LolD) and two transmembrane proteins (LolC and LolE).

Its subcellular location is the cell inner membrane. Functionally, part of the ABC transporter complex LolCDE involved in the translocation of mature outer membrane-directed lipoproteins, from the inner membrane to the periplasmic chaperone, LolA. Responsible for the formation of the LolA-lipoprotein complex in an ATP-dependent manner. The polypeptide is Lipoprotein-releasing system ATP-binding protein LolD (Idiomarina loihiensis (strain ATCC BAA-735 / DSM 15497 / L2-TR)).